The sequence spans 101 residues: Acylphosphatase-1 (101 aa).

N-acetylserine is present on S2. An N-acetylalanine modification is found at S2. The Acylphosphatase-like domain maps to S11–K101. Active-site residues include R26 and N44.

It belongs to the acylphosphatase family. Organ-common type isozyme is found in many different tissues.

It catalyses the reaction an acyl phosphate + H2O = a carboxylate + phosphate + H(+). In Sus scrofa (Pig), this protein is Acylphosphatase-1 (ACYP1).